We begin with the raw amino-acid sequence, 240 residues long: ATP-dependent Clp protease proteolytic subunit 2 (240 aa).

Ser132 (nucleophile) is an active-site residue. The active site involves His157.

Belongs to the peptidase S14 family. Fourteen ClpP subunits assemble into 2 heptameric rings which stack back to back to give a disk-like structure with a central cavity, resembling the structure of eukaryotic proteasomes.

It localises to the cytoplasm. The enzyme catalyses Hydrolysis of proteins to small peptides in the presence of ATP and magnesium. alpha-casein is the usual test substrate. In the absence of ATP, only oligopeptides shorter than five residues are hydrolyzed (such as succinyl-Leu-Tyr-|-NHMec, and Leu-Tyr-Leu-|-Tyr-Trp, in which cleavage of the -Tyr-|-Leu- and -Tyr-|-Trp bonds also occurs).. In terms of biological role, cleaves peptides in various proteins in a process that requires ATP hydrolysis. Has a chymotrypsin-like activity. Plays a major role in the degradation of misfolded proteins. The protein is ATP-dependent Clp protease proteolytic subunit 2 of Synechococcus elongatus (strain ATCC 33912 / PCC 7942 / FACHB-805) (Anacystis nidulans R2).